A 582-amino-acid chain; its full sequence is MHNDKDLSTWQTFRRLWPTIAPFKAGLIVAGIALILNAASDTFMLSLLKPLLDDGFGKTDRSVLLWMPLVVIGLMILRGITSYISSYCISWVSGKVVMTMRRRLFGHMMGMPVAFFDKQSTGTLLSRITYDSEQVASSSSGALITVVREGASIIGLFIMMFYYSWQLSIILVVLAPIVSIAIRVVSKRFRSISKNMQNTMGQVTTSAEQMLKGHKEVLIFGGQEVETKRFDKVSNKMRLQGMKMVSASSISDPIIQLIASLALAFVLYAASFPSVMDSLTAGTITVVFSSMIALMRPLKSLTNVNAQFQRGMAACQTLFAILDSEQEKDEGKRVIDRATGDLEFRNVTFTYPGREVPALRNINLKIPAGKTVALVGRSGSGKSTIASLITRFYDIDEGHILMDGHDLREYTLASLRNQVALVSQNVHLFNDTVANNIAYARTEEYSREQIEEAARMAYAMDFINKMDNGLDTIIGENGVLLSGGQRQRIAIARALLRDSPILILDEATSALDTESERAIQAALDELQKNRTSLMIAHRLSTIEQADEIVVVEDGIIVERGTHSELLAQHGVYAQLHKMQFGQ.

5 consecutive transmembrane segments (helical) span residues 16–36 (LWPT…ALIL), 64–84 (LLWM…TSYI), 153–173 (IIGL…ILVV), 253–273 (PIIQ…ASFP), and 275–295 (VMDS…IALM). The 283-residue stretch at 28–310 (IVAGIALILN…LTNVNAQFQR (283 aa)) folds into the ABC transmembrane type-1 domain. The 237-residue stretch at 342-578 (LEFRNVTFTY…HGVYAQLHKM (237 aa)) folds into the ABC transporter domain. ATP is bound at residue 376–383 (GRSGSGKS).

It belongs to the ABC transporter superfamily. Lipid exporter (TC 3.A.1.106) family. Homodimer.

The protein localises to the cell inner membrane. The enzyme catalyses ATP + H2O + lipid A-core oligosaccharideSide 1 = ADP + phosphate + lipid A-core oligosaccharideSide 2.. Functionally, involved in lipopolysaccharide (LPS) biosynthesis. Translocates lipid A-core from the inner to the outer leaflet of the inner membrane. Transmembrane domains (TMD) form a pore in the inner membrane and the ATP-binding domain (NBD) is responsible for energy generation. This is ATP-dependent lipid A-core flippase from Salmonella paratyphi A (strain ATCC 9150 / SARB42).